The chain runs to 177 residues: ATP synthase subunit delta (177 aa).

Belongs to the ATPase delta chain family. F-type ATPases have 2 components, F(1) - the catalytic core - and F(0) - the membrane proton channel. F(1) has five subunits: alpha(3), beta(3), gamma(1), delta(1), epsilon(1). F(0) has three main subunits: a(1), b(2) and c(10-14). The alpha and beta chains form an alternating ring which encloses part of the gamma chain. F(1) is attached to F(0) by a central stalk formed by the gamma and epsilon chains, while a peripheral stalk is formed by the delta and b chains.

It localises to the cell membrane. Its function is as follows. F(1)F(0) ATP synthase produces ATP from ADP in the presence of a proton or sodium gradient. F-type ATPases consist of two structural domains, F(1) containing the extramembraneous catalytic core and F(0) containing the membrane proton channel, linked together by a central stalk and a peripheral stalk. During catalysis, ATP synthesis in the catalytic domain of F(1) is coupled via a rotary mechanism of the central stalk subunits to proton translocation. This protein is part of the stalk that links CF(0) to CF(1). It either transmits conformational changes from CF(0) to CF(1) or is implicated in proton conduction. The protein is ATP synthase subunit delta of Caldanaerobacter subterraneus subsp. tengcongensis (strain DSM 15242 / JCM 11007 / NBRC 100824 / MB4) (Thermoanaerobacter tengcongensis).